Consider the following 210-residue polypeptide: MHLNQLVISHLACERGENRLFEGCHFSVSSGEWVQIEGHNGIGKTSLLRILAGLALPVAGEVLWNNLSIHKQRDEYYAELFYLGHYAGIKPELSAWENLRFYQKMQGLSLDDEALWFALDKVSLVERADLPCSYLSAGQQRRVALAKLWLTQQKLWILDEPFTAIDNHGVGDLIMHIERHCSLGGMAIFTSHQTVESNKVRTLSLDQFKL.

The region spanning 1–208 (MHLNQLVISH…KVRTLSLDQF (208 aa)) is the ABC transporter domain. 38–45 (GHNGIGKT) contributes to the ATP binding site.

Belongs to the ABC transporter superfamily. CcmA exporter (TC 3.A.1.107) family. In terms of assembly, the complex is composed of two ATP-binding proteins (CcmA) and two transmembrane proteins (CcmB).

It localises to the cell inner membrane. The enzyme catalyses heme b(in) + ATP + H2O = heme b(out) + ADP + phosphate + H(+). In terms of biological role, part of the ABC transporter complex CcmAB involved in the biogenesis of c-type cytochromes; once thought to export heme, this seems not to be the case, but its exact role is uncertain. Responsible for energy coupling to the transport system. The sequence is that of Cytochrome c biogenesis ATP-binding export protein CcmA from Haemophilus ducreyi (strain 35000HP / ATCC 700724).